The sequence spans 468 residues: Mitochondrial distribution and morphology protein 10 (468 aa).

Residues 370-386 (ERDGLPGIQRDDHDMHH) are compositionally biased toward basic and acidic residues. Residues 370-394 (ERDGLPGIQRDDHDMHHHPQRPHAS) form a disordered region.

This sequence belongs to the MDM10 family. As to quaternary structure, component of the ER-mitochondria encounter structure (ERMES) or MDM complex, composed of MMM1, MDM10, MDM12 and MDM34. Associates with the mitochondrial outer membrane sorting assembly machinery SAM(core) complex.

The protein localises to the mitochondrion outer membrane. Component of the ERMES/MDM complex, which serves as a molecular tether to connect the endoplasmic reticulum and mitochondria. Components of this complex are involved in the control of mitochondrial shape and protein biogenesis and may function in phospholipid exchange. MDM10 is involved in the late assembly steps of the general translocase of the mitochondrial outer membrane (TOM complex). Functions in the TOM40-specific route of the assembly of outer membrane beta-barrel proteins, including the association of TOM40 with the receptor TOM22 and small TOM proteins. Can associate with the SAM(core) complex as well as the MDM12-MMM1 complex, both involved in late steps of the major beta-barrel assembly pathway, that is responsible for biogenesis of all outer membrane beta-barrel proteins. May act as a switch that shuttles between both complexes and channels precursor proteins into the TOM40-specific pathway. Plays a role in mitochondrial morphology and in the inheritance of mitochondria. In Ajellomyces dermatitidis (strain ER-3 / ATCC MYA-2586) (Blastomyces dermatitidis), this protein is Mitochondrial distribution and morphology protein 10.